The chain runs to 159 residues: Ribosomal RNA large subunit methyltransferase H (159 aa).

Residues Leu-76, Gly-108, and 127 to 132 (LSKMTF) contribute to the S-adenosyl-L-methionine site.

This sequence belongs to the RNA methyltransferase RlmH family. Homodimer.

The protein localises to the cytoplasm. The catalysed reaction is pseudouridine(1915) in 23S rRNA + S-adenosyl-L-methionine = N(3)-methylpseudouridine(1915) in 23S rRNA + S-adenosyl-L-homocysteine + H(+). Specifically methylates the pseudouridine at position 1915 (m3Psi1915) in 23S rRNA. This Ureaplasma urealyticum serovar 10 (strain ATCC 33699 / Western) protein is Ribosomal RNA large subunit methyltransferase H.